The chain runs to 92 residues: MPSTADERQLLDELRDLLAATVEDLTVEEIGPDSSLQDDLGVDSLARLELVAAIEDRWQIEVPQEQADRLTTVRQIAAHLAEAVAAPAGGTA.

The 84-residue stretch at 1-84 folds into the Carrier domain; that stretch reads MPSTADERQL…QIAAHLAEAV (84 aa). At S44 the chain carries O-(pantetheine 4'-phosphoryl)serine.

This sequence belongs to the acyl carrier protein (ACP) family. In terms of processing, 4'-phosphopantetheine is transferred from CoA to a specific serine of apo-ACP by AcpS. This modification is essential for activity because fatty acids are bound in thioester linkage to the sulfhydryl of the prosthetic group.

Its subcellular location is the cytoplasm. Its pathway is lipid metabolism; fatty acid biosynthesis. Its function is as follows. Carrier of the growing fatty acid chain in fatty acid biosynthesis. This Streptomyces coelicolor (strain ATCC BAA-471 / A3(2) / M145) protein is Acyl carrier protein.